We begin with the raw amino-acid sequence, 254 residues long: Distal membrane-arm assembly complex protein 2 (254 aa).

Serine 250 carries the post-translational modification Phosphoserine.

The protein belongs to the ATP synthase subunit s family. As to quaternary structure, interacts with incompletely assembled mitochondrial NADH:ubiquinone oxidoreductase complex (complex I).

It localises to the mitochondrion. Required for the assembly of the mitochondrial NADH:ubiquinone oxidoreductase complex (complex I). Involved in the assembly of the distal region of complex I. This is Distal membrane-arm assembly complex protein 2 from Rattus norvegicus (Rat).